Reading from the N-terminus, the 130-residue chain is Ribonuclease P protein component (130 aa).

This sequence belongs to the RnpA family. As to quaternary structure, consists of a catalytic RNA component (M1 or rnpB) and a protein subunit.

The catalysed reaction is Endonucleolytic cleavage of RNA, removing 5'-extranucleotides from tRNA precursor.. Functionally, RNaseP catalyzes the removal of the 5'-leader sequence from pre-tRNA to produce the mature 5'-terminus. It can also cleave other RNA substrates such as 4.5S RNA. The protein component plays an auxiliary but essential role in vivo by binding to the 5'-leader sequence and broadening the substrate specificity of the ribozyme. In Psychrobacter sp. (strain PRwf-1), this protein is Ribonuclease P protein component.